The sequence spans 594 residues: Pentatricopeptide repeat-containing protein At1g15480, mitochondrial (594 aa).

The transit peptide at 1–67 directs the protein to the mitochondrion; sequence MFALSKVLRR…WSSSTGRRSL (67 aa). The segment covering 62 to 75 has biased composition (low complexity); the sequence is TGRRSLSSDAGAKT. A disordered region spans residues 62–109; that stretch reads TGRRSLSSDAGAKTTGDDDDLEDKNVDLATPDETSSDSEDGEEFSGDE. The span at 95-109 shows a compositional bias: acidic residues; that stretch reads TSSDSEDGEEFSGDE. PPR repeat units follow at residues 226 to 260, 261 to 294, 295 to 329, 330 to 364, 432 to 466, 467 to 502, and 503 to 537; these read GELV…GFPL, STFT…NLKP, NLNT…GVEL, DLRA…SLEE, SSNV…GCNI, GALT…QIKP, and LMSS…GYQS.

This sequence belongs to the PPR family. P subfamily.

It localises to the mitochondrion. In Arabidopsis thaliana (Mouse-ear cress), this protein is Pentatricopeptide repeat-containing protein At1g15480, mitochondrial.